A 316-amino-acid chain; its full sequence is Probable cell division protein WhiA (316 aa).

A DNA-binding region (H-T-H motif) is located at residues 275–309; that stretch reads TLKELGEMVASGKISKSGINHRLRKLDEIAEQLRT.

Belongs to the WhiA family.

Its function is as follows. Involved in cell division and chromosome segregation. This chain is Probable cell division protein WhiA, found in Bacillus velezensis (strain DSM 23117 / BGSC 10A6 / LMG 26770 / FZB42) (Bacillus amyloliquefaciens subsp. plantarum).